Here is a 610-residue protein sequence, read N- to C-terminus: UvrABC system protein C (610 aa).

Residues 13-91 (HLPGVYRMYD…IKENQPKYNV (79 aa)) enclose the GIY-YIG domain. Residues 201–236 (GQVVEHLVQKMENAAQELDFEAAARFRDQIQSVRAV) enclose the UVR domain.

It belongs to the UvrC family. As to quaternary structure, interacts with UvrB in an incision complex.

It localises to the cytoplasm. The UvrABC repair system catalyzes the recognition and processing of DNA lesions. UvrC both incises the 5' and 3' sides of the lesion. The N-terminal half is responsible for the 3' incision and the C-terminal half is responsible for the 5' incision. The protein is UvrABC system protein C of Actinobacillus pleuropneumoniae serotype 5b (strain L20).